The chain runs to 169 residues: tRNA (cytidine(56)-2'-O)-methyltransferase (169 aa).

S-adenosyl-L-methionine is bound by residues Leu77, 103–107 (GSEKV), and 121–128 (IGNQPHSE).

The protein belongs to the aTrm56 family. Homodimer.

The protein localises to the cytoplasm. It carries out the reaction cytidine(56) in tRNA + S-adenosyl-L-methionine = 2'-O-methylcytidine(56) in tRNA + S-adenosyl-L-homocysteine + H(+). Its function is as follows. Specifically catalyzes the AdoMet-dependent 2'-O-ribose methylation of cytidine at position 56 in tRNAs. This chain is tRNA (cytidine(56)-2'-O)-methyltransferase, found in Sulfurisphaera tokodaii (strain DSM 16993 / JCM 10545 / NBRC 100140 / 7) (Sulfolobus tokodaii).